Here is a 298-residue protein sequence, read N- to C-terminus: tRNA pseudouridine synthase A (298 aa).

Asp-56 serves as the catalytic Nucleophile. Tyr-125 contributes to the substrate binding site.

This sequence belongs to the tRNA pseudouridine synthase TruA family. Homodimer.

The enzyme catalyses uridine(38/39/40) in tRNA = pseudouridine(38/39/40) in tRNA. Formation of pseudouridine at positions 38, 39 and 40 in the anticodon stem and loop of transfer RNAs. This is tRNA pseudouridine synthase A from Bifidobacterium animalis subsp. lactis (strain AD011).